We begin with the raw amino-acid sequence, 624 residues long: ATP-dependent zinc metalloprotease FtsH (624 aa).

Residues 1 to 7 (MPRAPFS) are Cytoplasmic-facing. The helical transmembrane segment at 8–28 (LLALVLGLAFLAWAFSLAGTV) threads the bilayer. Topologically, residues 29 to 103 (GAPSGTVNYT…VRVEPPQGQN (75 aa)) are periplasmic. Residues 104 to 124 (ALGFLWPLLLVGLLIGALYYF) form a helical membrane-spanning segment. Residues 125 to 624 (SRNGRAGPSD…VKPGGALGGA (500 aa)) are Cytoplasmic-facing. ATP contacts are provided by residues A159, 199–203 (GVGKT), and H204. H418 serves as a coordination point for Zn(2+). E419 is a catalytic residue. Zn(2+) is bound by residues H422 and D493. The segment at 595-624 (PLEAPEEAREEREPPRVVPKVKPGGALGGA) is disordered. A compositionally biased stretch (basic and acidic residues) spans 600–609 (EEAREEREPP).

It in the central section; belongs to the AAA ATPase family. This sequence in the C-terminal section; belongs to the peptidase M41 family. In terms of assembly, the isolated soluble domain (residues 126-624) forms a stable hexamer in which the AAA+ domains (residues 126-400) are alternatively open or closed. The cofactor is Zn(2+).

The protein localises to the cell inner membrane. Its activity is regulated as follows. The proteolytic activity is dependent on ATP, both the ATPase and protease activities are inhibited by ADP. Functionally, acts as a processive, ATP-dependent zinc metallopeptidase for both cytoplasmic and membrane proteins. Plays a role in the quality control of integral membrane proteins. Its function is as follows. Degrades preferentially unfolded substrates in a processive, ATP-dependent manner, usually after hydrophobic residues. This Thermus thermophilus (strain ATCC 27634 / DSM 579 / HB8) protein is ATP-dependent zinc metalloprotease FtsH.